Consider the following 37-residue polypeptide: Omega-agatoxin-Aa3d (37 aa).

The protein belongs to the neurotoxin 04 (omega-agtx) family. 03 (type II/III omega-agtx) subfamily. Post-translationally, disulfide bonds are present. In terms of tissue distribution, expressed by the venom gland.

It localises to the secreted. Its function is as follows. Omega-agatoxins are antagonists of voltage-gated calcium channels. This toxin blocks calcium channels in insect central neurons but not at peripheral neuromuscular junctions. In vertebrates, it is broadly active against all high-threshold Cav1/CACNA1 channels and Cav2.2/CACNA1B channels. This chain is Omega-agatoxin-Aa3d, found in Agelenopsis aperta (North American funnel-web spider).